The following is a 184-amino-acid chain: RNA 2',3'-cyclic phosphodiesterase (184 aa).

His42 (proton donor) is an active-site residue. 2 short sequence motifs (HXTX) span residues 42 to 45 and 127 to 130; these read HFTL and HLTV. His127 functions as the Proton acceptor in the catalytic mechanism.

Belongs to the 2H phosphoesterase superfamily. ThpR family.

It catalyses the reaction a 3'-end 2',3'-cyclophospho-ribonucleotide-RNA + H2O = a 3'-end 2'-phospho-ribonucleotide-RNA + H(+). In terms of biological role, hydrolyzes RNA 2',3'-cyclic phosphodiester to an RNA 2'-phosphomonoester. The protein is RNA 2',3'-cyclic phosphodiesterase of Methanothermobacter thermautotrophicus (strain ATCC 29096 / DSM 1053 / JCM 10044 / NBRC 100330 / Delta H) (Methanobacterium thermoautotrophicum).